A 156-amino-acid polypeptide reads, in one-letter code: Endoribonuclease YbeY (156 aa).

Residues His-115, His-119, and His-125 each coordinate Zn(2+).

Belongs to the endoribonuclease YbeY family. Requires Zn(2+) as cofactor.

The protein localises to the cytoplasm. Functionally, single strand-specific metallo-endoribonuclease involved in late-stage 70S ribosome quality control and in maturation of the 3' terminus of the 16S rRNA. The chain is Endoribonuclease YbeY from Mannheimia succiniciproducens (strain KCTC 0769BP / MBEL55E).